The sequence spans 227 residues: Ribonuclease 3 (227 aa).

Positions 4–133 constitute an RNase III domain; sequence FETLEKLLSY…LIAAIYLDSN (130 aa). Glu46 is a binding site for Mg(2+). Asp50 is an active-site residue. Mg(2+)-binding residues include Asn119 and Glu122. Glu122 is an active-site residue. A DRBM domain is found at 158 to 226; sequence DPKTALQEWA…ARSLLHRLKN (69 aa).

This sequence belongs to the ribonuclease III family. In terms of assembly, homodimer. Mg(2+) is required as a cofactor.

Its subcellular location is the cytoplasm. The enzyme catalyses Endonucleolytic cleavage to 5'-phosphomonoester.. In terms of biological role, digests double-stranded RNA. Involved in the processing of primary rRNA transcript to yield the immediate precursors to the large and small rRNAs (23S and 16S). Processes some mRNAs, and tRNAs when they are encoded in the rRNA operon. Processes pre-crRNA and tracrRNA of type II CRISPR loci if present in the organism. This is Ribonuclease 3 from Rickettsia massiliae (strain Mtu5).